Consider the following 238-residue polypeptide: Ribosomal RNA small subunit methyltransferase G (238 aa).

S-adenosyl-L-methionine contacts are provided by residues G77, F82, 128–129, and R147; that span reads AE.

The protein belongs to the methyltransferase superfamily. RNA methyltransferase RsmG family.

It is found in the cytoplasm. Functionally, specifically methylates the N7 position of guanine in position 535 of 16S rRNA. The chain is Ribosomal RNA small subunit methyltransferase G from Listeria innocua serovar 6a (strain ATCC BAA-680 / CLIP 11262).